Reading from the N-terminus, the 159-residue chain is NADH-quinone oxidoreductase subunit B (159 aa).

C36, C37, C102, and C132 together coordinate [4Fe-4S] cluster.

This sequence belongs to the complex I 20 kDa subunit family. As to quaternary structure, NDH-1 is composed of 14 different subunits. Subunits NuoB, C, D, E, F, and G constitute the peripheral sector of the complex. The cofactor is [4Fe-4S] cluster.

Its subcellular location is the cell inner membrane. The catalysed reaction is a quinone + NADH + 5 H(+)(in) = a quinol + NAD(+) + 4 H(+)(out). In terms of biological role, NDH-1 shuttles electrons from NADH, via FMN and iron-sulfur (Fe-S) centers, to quinones in the respiratory chain. Couples the redox reaction to proton translocation (for every two electrons transferred, four hydrogen ions are translocated across the cytoplasmic membrane), and thus conserves the redox energy in a proton gradient. The sequence is that of NADH-quinone oxidoreductase subunit B from Delftia acidovorans (strain DSM 14801 / SPH-1).